The following is a 403-amino-acid chain: MALLLNSTMTVAMKQNPATAVSFMQTTCLGSSFSPPRHLQVSCVATNPSKTFRPIKEVSNQVTHTITQEKLEIFKSMENWAQENLLSYLKPVETSWQPQDFLPETKDEDRFYEQVKELRDRTKEIPDDYFVVLVGDMITEEALPTYQTVMNTLDGAKDETGVSLTPWAVWLRAWTAEENRHGDLLNKYLYLSGRVDTRHVEKTIQYLIGSGMDTKYENNPYNGYIYTSFQERATFISHANTAKLATTYGDTTLAKICGTIAADEKRHEMAYTRIVEKLFEIDPDGTVQALASMMRKRITMPAQLMHDGRDDNLFDHYAAVAQRIGVYTATDYAGILEFLLRRWEVEKLGMGLSGEGRRAQDYLCTLPQRIRRLEERADDRVKRASKSKPSVSFSWIYGREVEL.

The transit peptide at 1–44 directs the protein to the chloroplast; sequence MALLLNSTMTVAMKQNPATAVSFMQTTCLGSSFSPPRHLQVSCV. Fe cation is bound by residues E140, E178, H181, E231, E264, and H267.

It belongs to the fatty acid desaturase type 2 family. As to quaternary structure, homodimer. Fe(2+) serves as cofactor. Preferentially expressed in roots.

The protein resides in the plastid. The protein localises to the chloroplast. It carries out the reaction octadecanoyl-[ACP] + 2 reduced [2Fe-2S]-[ferredoxin] + O2 + 2 H(+) = (9Z)-octadecenoyl-[ACP] + 2 oxidized [2Fe-2S]-[ferredoxin] + 2 H2O. Its pathway is lipid metabolism; fatty acid metabolism. Converts stearoyl-ACP to oleoyl-ACP by introduction of a cis double bond between carbons 9 and 10 of the acyl chain. This is Stearoyl-[acyl-carrier-protein] 9-desaturase 4, chloroplastic (S-ACP-DES4) from Arabidopsis thaliana (Mouse-ear cress).